A 357-amino-acid chain; its full sequence is S-adenosyl-L-methionine:benzoic acid/salicylic acid carboxyl methyltransferase 2 (357 aa).

Tyr-18 is an S-adenosyl-L-homocysteine binding site. Residue Gln-25 coordinates benzoate. S-adenosyl-L-homocysteine-binding residues include Cys-59, Asn-64, Asp-96, Leu-97, Ser-135, and Phe-136. Trp-157 is a benzoate binding site. Residues Asn-168, Asp-254, Phe-256, and Asn-257 each coordinate Mg(2+). Gln-260 is a benzoate binding site.

Belongs to the methyltransferase superfamily. Type-7 methyltransferase family. Predominantly expressed in petal limbs and tubes of corollas.

The catalysed reaction is benzoate + S-adenosyl-L-methionine = methyl benzoate + S-adenosyl-L-homocysteine. It carries out the reaction salicylate + S-adenosyl-L-methionine = methyl salicylate + S-adenosyl-L-homocysteine. The protein operates within aromatic compound metabolism. Converts benzoic acid into the volatile ester methyl benzoates. This scent, mostly produced in a rhythmical, diurnal manner, attracts the pollinators. The chain is S-adenosyl-L-methionine:benzoic acid/salicylic acid carboxyl methyltransferase 2 from Petunia hybrida (Petunia).